The sequence spans 239 residues: Sugar fermentation stimulation protein homolog (239 aa).

This sequence belongs to the SfsA family.

This is Sugar fermentation stimulation protein homolog from Synechococcus sp. (strain JA-2-3B'a(2-13)) (Cyanobacteria bacterium Yellowstone B-Prime).